The sequence spans 447 residues: UDP-N-acetylmuramoylalanine--D-glutamate ligase (447 aa).

130 to 136 (GTSGKTT) is an ATP binding site.

The protein belongs to the MurCDEF family.

It localises to the cytoplasm. It carries out the reaction UDP-N-acetyl-alpha-D-muramoyl-L-alanine + D-glutamate + ATP = UDP-N-acetyl-alpha-D-muramoyl-L-alanyl-D-glutamate + ADP + phosphate + H(+). Its pathway is cell wall biogenesis; peptidoglycan biosynthesis. Its function is as follows. Cell wall formation. Catalyzes the addition of glutamate to the nucleotide precursor UDP-N-acetylmuramoyl-L-alanine (UMA). The protein is UDP-N-acetylmuramoylalanine--D-glutamate ligase of Oleidesulfovibrio alaskensis (strain ATCC BAA-1058 / DSM 17464 / G20) (Desulfovibrio alaskensis).